The following is a 59-amino-acid chain: Large ribosomal subunit protein bL32c (59 aa).

Residues 1–20 are disordered; sequence MAVPKKRTSKSKKRIRKSVW.

It belongs to the bacterial ribosomal protein bL32 family.

The protein resides in the plastid. It is found in the chloroplast. The polypeptide is Large ribosomal subunit protein bL32c (Angiopteris evecta (Mule's foot fern)).